We begin with the raw amino-acid sequence, 155 residues long: Transcription antitermination protein NusB (155 aa).

Belongs to the NusB family.

Involved in transcription antitermination. Required for transcription of ribosomal RNA (rRNA) genes. Binds specifically to the boxA antiterminator sequence of the ribosomal RNA (rrn) operons. The sequence is that of Transcription antitermination protein NusB from Vibrio parahaemolyticus serotype O3:K6 (strain RIMD 2210633).